The chain runs to 279 residues: ESX-1 secretion-associated protein EspG1 (279 aa).

The protein belongs to the EspG family. In terms of assembly, interacts specifically with ESX-1-dependent PE/PPE proteins.

Its subcellular location is the cytoplasm. In terms of biological role, specific chaperone for cognate PE/PPE proteins. Plays an important role in preventing aggregation of PE/PPE dimers. In Mycobacterium marinum (strain ATCC BAA-535 / M), this protein is ESX-1 secretion-associated protein EspG1.